A 352-amino-acid chain; its full sequence is Fe(3+) ions import ATP-binding protein FbpC (352 aa).

An ABC transporter domain is found at 5–239 (LHIGHLSKSF…PADLDAALFI (235 aa)). 37–44 (GASGCGKT) is a binding site for ATP.

Belongs to the ABC transporter superfamily. Fe(3+) ion importer (TC 3.A.1.10) family. As to quaternary structure, the complex is composed of two ATP-binding proteins (FbpC), two transmembrane proteins (FbpB) and a solute-binding protein (FbpA).

It localises to the cell inner membrane. The catalysed reaction is Fe(3+)(out) + ATP + H2O = Fe(3+)(in) + ADP + phosphate + H(+). Part of the ABC transporter complex FbpABC involved in Fe(3+) ions import. Responsible for energy coupling to the transport system. The sequence is that of Fe(3+) ions import ATP-binding protein FbpC from Neisseria meningitidis serogroup A / serotype 4A (strain DSM 15465 / Z2491).